A 449-amino-acid polypeptide reads, in one-letter code: UDP-N-acetylmuramoylalanine--D-glutamate ligase (449 aa).

Residue 119–125 (GTNGKTT) coordinates ATP.

Belongs to the MurCDEF family.

It is found in the cytoplasm. It carries out the reaction UDP-N-acetyl-alpha-D-muramoyl-L-alanine + D-glutamate + ATP = UDP-N-acetyl-alpha-D-muramoyl-L-alanyl-D-glutamate + ADP + phosphate + H(+). The protein operates within cell wall biogenesis; peptidoglycan biosynthesis. In terms of biological role, cell wall formation. Catalyzes the addition of glutamate to the nucleotide precursor UDP-N-acetylmuramoyl-L-alanine (UMA). The polypeptide is UDP-N-acetylmuramoylalanine--D-glutamate ligase (Lactococcus lactis subsp. cremoris (strain SK11)).